A 1321-amino-acid chain; its full sequence is MSDSVILRSIKKFGEENDGFESDKSYNNDKKSRLQDEKKGDGVRVGFFQLFRFSSSTDIWLMFVGSLCAFLHGIAQPGVLLIFGTMTDVFIDYDVELQELQIPGKACVNNTIVWTNSSLNQNMTNGTRCGLLNIESEMIKFASYYAGIAVAVLITGYIQICFWVIAAARQIQKMRKFYFRRIMRMEIGWFDCNSVGELNTRFSDDINKINDAIADQMALFIQRMTSTICGFLLGFFRGWKLTLVIISVSPLIGIGAATIGLSVSKFTDYELKAYAKAGVVADEVISSMRTVAAFGGEKREVERYEKNLVFAQRWGIRKGIVMGFFTGFVWCLIFLCYALAFWYGSTLVLDEGEYTPGTLVQIFLSVIVGALNLGNASPCLEAFATGRAAATSIFETIDRKPIIDCMSEDGYKLDRIKGEIEFHNVTFHYPSRPEVKILNDLNMVIKPGEMTALVGPSGAGKSTALQLIQRFYDPCEGMVTVDGHDIRSLNIQWLRDQIGIVEQEPVLFSTTIAENIRYGREDATMEDIVQAAKEANAYNFIMDLPQQFDTLVGEGGGQMSGGQKQRVAIARALIRNPKILLLDMATSALDNESEAMVQEVLSKIQHGHTIISVAHRLSTVRAADTIIGFEHGTAVERGTHEELLERKGVYFTLVTLQSQGNQALNEEDIKDATEDDMLARTFSRGSYQDSLRASIRQRSKSQLSYLVHEPPLAVVDHKSTYEEDRKDKDIPVQEEVEPAPVRRILKFSAPEWPYMLVGSVGAAVNGTVTPLYAFLFSQILGTFSIPDKEEQRSQINGVCLLFVAMGCVSLFTQFLQGYAFAKSGELLTKRLRKFGFRAMLGQDIAWFDDLRNSPGALTTRLATDASQVQGAAGSQIGMIVNSFTNVTVAMIIAFSFSWKLSLVILCFFPFLALSGATQTRMLTGFASRDKQALEMVGQITNEALSNIRTVAGIGKERRFIEALETELEKPFKTAIQKANIYGFCFAFAQCIMFIANSASYRYGGYLISNEGLHFSYVFRVISAVVLSATALGRAFSYTPSYAKAKISAARFFQLLDRQPPISVYNTAGEKWDNFQGKIDFVDCKFTYPSRPDSQVLNGLSVSISPGQTLAFVGSSGCGKSTSIQLLERFYDPDQGKVMIDGHDSKKVNVQFLRSNIGIVSQEPVLFACSIMDNIKYGDNTKEIPMERVIAAAKQAQLHDFVMSLPEKYETNVGSQGSQLSRGEKQRIAIARAIVRDPKILLLDEATSALDTESEKTVQVALDKAREGRTCIVIAHRLSTIQNADIIAVMAQGVVIEKGTHEELMAQKGAYYKLVTTGSPIS.

At 1–62 (MSDSVILRSI…FSSSTDIWLM (62 aa)) the chain is on the cytoplasmic side. The tract at residues 16–37 (ENDGFESDKSYNNDKKSRLQDE) is disordered. Residues 21–37 (ESDKSYNNDKKSRLQDE) show a composition bias toward basic and acidic residues. Positions 62–385 (MFVGSLCAFL…ASPCLEAFAT (324 aa)) constitute an ABC transmembrane type-1 1 domain. The helical transmembrane segment at 63–83 (FVGSLCAFLHGIAQPGVLLIF) threads the bilayer. Residues 84–147 (GTMTDVFIDY…MIKFASYYAG (64 aa)) lie on the Extracellular side of the membrane. N-linked (GlcNAc...) asparagine glycans are attached at residues asparagine 109, asparagine 116, asparagine 122, and asparagine 125. The chain crosses the membrane as a helical span at residues 148–168 (IAVAVLITGYIQICFWVIAAA). Topologically, residues 169–215 (RQIQKMRKFYFRRIMRMEIGWFDCNSVGELNTRFSDDINKINDAIAD) are cytoplasmic. Residues 216 to 236 (QMALFIQRMTSTICGFLLGFF) form a helical membrane-spanning segment. The Extracellular segment spans residues 237-240 (RGWK). A helical membrane pass occupies residues 241–261 (LTLVIISVSPLIGIGAATIGL). Residues 262 to 319 (SVSKFTDYELKAYAKAGVVADEVISSMRTVAAFGGEKREVERYEKNLVFAQRWGIRKG) lie on the Cytoplasmic side of the membrane. Residues 320–340 (IVMGFFTGFVWCLIFLCYALA) traverse the membrane as a helical segment. The Extracellular segment spans residues 341-353 (FWYGSTLVLDEGE). A helical transmembrane segment spans residues 354-374 (YTPGTLVQIFLSVIVGALNLG). Residues 375–755 (NASPCLEAFA…KFSAPEWPYM (381 aa)) are Cytoplasmic-facing. The 237-residue stretch at 420-656 (IEFHNVTFHY…KGVYFTLVTL (237 aa)) folds into the ABC transporter 1 domain. 455-462 (GPSGAGKS) provides a ligand contact to ATP. Threonine 586 is modified (phosphothreonine). The residue at position 587 (serine 587) is a Phosphoserine. Positions 651–672 (FTLVTLQSQGNQALNEEDIKDA) are interaction with HAX1. A phosphoserine mark is found at serine 690, serine 701, and serine 704. The region spanning 755 to 1043 (MLVGSVGAAV…AFSYTPSYAK (289 aa)) is the ABC transmembrane type-1 2 domain. Residues 756-776 (LVGSVGAAVNGTVTPLYAFLF) form a helical membrane-spanning segment. Topologically, residues 777 to 794 (SQILGTFSIPDKEEQRSQ) are extracellular. The helical transmembrane segment at 795 to 815 (INGVCLLFVAMGCVSLFTQFL) threads the bilayer. At 816–869 (QGYAFAKSGELLTKRLRKFGFRAMLGQDIAWFDDLRNSPGALTTRLATDASQVQ) the chain is on the cytoplasmic side. 2 consecutive transmembrane segments (helical) span residues 870 to 890 (GAAG…TVAM) and 891 to 911 (IIAF…FPFL). The Cytoplasmic portion of the chain corresponds to 912-979 (ALSGATQTRM…PFKTAIQKAN (68 aa)). Residues 980-1000 (IYGFCFAFAQCIMFIANSASY) form a helical membrane-spanning segment. Residues 1001–1011 (RYGGYLISNEG) lie on the Extracellular side of the membrane. Residues 1012 to 1032 (LHFSYVFRVISAVVLSATALG) traverse the membrane as a helical segment. At 1033 to 1321 (RAFSYTPSYA…KLVTTGSPIS (289 aa)) the chain is on the cytoplasmic side. Residues 1078-1316 (IDFVDCKFTY…KGAYYKLVTT (239 aa)) form the ABC transporter 2 domain. Residue 1113-1120 (GSSGCGKS) coordinates ATP. The residue at position 1214 (serine 1214) is a Phosphoserine. Positions 1311-1314 (YKLV) are mediates internalization from the plasma membrane. Serine 1321 is modified (phosphoserine).

Belongs to the ABC transporter superfamily. ABCB family. Multidrug resistance exporter (TC 3.A.1.201) subfamily. In terms of assembly, interacts with HAX1. Interacts with the adapter protein complex 2 (AP-2) throught AP2A2 or AP2A1; this interaction regulates cell membrane expression of ABCB11 through its internalization in a clathrin-dependent manner and its subsequent degradation. Post-translationally, N-glycosylated. Ubiquitinated; short-chain ubiquitination regulates cell-Surface expression of ABCB11. Expressed predominantly, if not exclusively in the liver, where it was further localized to the canalicular microvilli and to subcanalicular vesicles of the hepatocytes by in situ.

The protein resides in the apical cell membrane. Its subcellular location is the recycling endosome membrane. The protein localises to the endosome. It localises to the cell membrane. The catalysed reaction is cholate(in) + ATP + H2O = cholate(out) + ADP + phosphate + H(+). It carries out the reaction taurocholate(in) + ATP + H2O = taurocholate(out) + ADP + phosphate + H(+). It catalyses the reaction glycocholate(in) + ATP + H2O = glycocholate(out) + ADP + phosphate + H(+). The enzyme catalyses glycochenodeoxycholate(in) + ATP + H2O = glycochenodeoxycholate(out) + ADP + phosphate + H(+). The catalysed reaction is taurochenodeoxycholate(in) + ATP + H2O = taurochenodeoxycholate(out) + ADP + phosphate + H(+). It carries out the reaction glycoursodeoxycholate(in) + ATP + H2O = glycoursodeoxycholate(out) + ADP + phosphate + H(+). It catalyses the reaction tauroursodeoxycholate(in) + ATP + H2O = tauroursodeoxycholate(out) + ADP + phosphate + H(+). The enzyme catalyses taurodeoxycholate(in) + ATP + H2O = taurodeoxycholate(out) + ADP + phosphate + H(+). The catalysed reaction is taurolithocholate 3-sulfate(in) + ATP + H2O = taurolithocholate 3-sulfate(out) + ADP + phosphate + H(+). It carries out the reaction pravastatin(in) + ATP + H2O = pravastatin(out) + ADP + phosphate + H(+). The uptake of taurocholate is inhibited by taurolithocholate sulfate with an IC(50) of 9 uM. Pravastatin competitively inhibits the transport of taurocholic acid. Cyclosporin A, glibenclamide, rifampicin and troglitazonestrongly competitively inhibit the transport activity of taurocholate. The canalicular transport activity of taurocholate is strongly dependent on canalicular membrane cholesterol content. The uptake of taurocholate is increased by short- and medium-chain fatty acids. Cholesterol increases transport capacity of taurocholate without affecting the affinity for the substrate. Functionally, catalyzes the transport of the major hydrophobic bile salts, such as taurine and glycine-conjugated cholic acid across the canalicular membrane of hepatocytes in an ATP-dependent manner, therefore participates in hepatic bile acid homeostasis and consequently to lipid homeostasis through regulation of biliary lipid secretion in a bile salts dependent manner. Transports taurine-conjugated bile salts more rapidly than glycine-conjugated bile salts. Also transports non-bile acid compounds, such as pravastatin and fexofenadine in an ATP-dependent manner and may be involved in their biliary excretion. The sequence is that of Bile salt export pump from Homo sapiens (Human).